Here is a 1444-residue protein sequence, read N- to C-terminus: RNA-directed RNA polymerase P1 (1444 aa).

Residues 157-181 (EEIQMDESQSDKRRRKKRMEKSRPV) are disordered. A RdRp catalytic domain is found at 690–897 (LGVGFATLYQ…KTVISHISGE (208 aa)).

The protein belongs to the reoviridae RNA-directed RNA polymerase family.

The protein resides in the virion. The protein localises to the host cytoplasm. The enzyme catalyses RNA(n) + a ribonucleoside 5'-triphosphate = RNA(n+1) + diphosphate. Functionally, RNA-directed RNA polymerase that is involved in both transcription and genome replication. Together with the capping enzyme P5 and protein P7, forms an enzyme complex positioned near the channels situated at each of the five-fold vertices of the core. The polypeptide is RNA-directed RNA polymerase P1 (Rice dwarf virus (isolate Akita) (RDV)).